Consider the following 314-residue polypeptide: tRNA dimethylallyltransferase (314 aa).

Residue 9 to 16 (GPTAVGKT) participates in ATP binding. 11–16 (TAVGKT) contributes to the substrate binding site. An interaction with substrate tRNA region spans residues 34 to 37 (DSVQ).

It belongs to the IPP transferase family. In terms of assembly, monomer. Mg(2+) is required as a cofactor.

The catalysed reaction is adenosine(37) in tRNA + dimethylallyl diphosphate = N(6)-dimethylallyladenosine(37) in tRNA + diphosphate. Functionally, catalyzes the transfer of a dimethylallyl group onto the adenine at position 37 in tRNAs that read codons beginning with uridine, leading to the formation of N6-(dimethylallyl)adenosine (i(6)A). This Desulfitobacterium hafniense (strain DSM 10664 / DCB-2) protein is tRNA dimethylallyltransferase.